The chain runs to 176 residues: HTH-type transcriptional regulator DctR (176 aa).

The 66-residue stretch at 109 to 174 (VPEADVSLSR…ELVRHQHINY (66 aa)) folds into the HTH luxR-type domain. A DNA-binding region (H-T-H motif) is located at residues 133 to 152 (TEDILEKLKISLKTFYCHKH).

In terms of biological role, may act as a transcriptional regulator of dctA. This is HTH-type transcriptional regulator DctR (dctR) from Escherichia coli O6:H1 (strain CFT073 / ATCC 700928 / UPEC).